We begin with the raw amino-acid sequence, 295 residues long: Bifunctional protein FolD 1 (295 aa).

Residues 165–167, Ile-190, and Ile-231 each bind NADP(+); that span reads GKS.

Belongs to the tetrahydrofolate dehydrogenase/cyclohydrolase family. Homodimer.

The catalysed reaction is (6R)-5,10-methylene-5,6,7,8-tetrahydrofolate + NADP(+) = (6R)-5,10-methenyltetrahydrofolate + NADPH. The enzyme catalyses (6R)-5,10-methenyltetrahydrofolate + H2O = (6R)-10-formyltetrahydrofolate + H(+). It functions in the pathway one-carbon metabolism; tetrahydrofolate interconversion. In terms of biological role, catalyzes the oxidation of 5,10-methylenetetrahydrofolate to 5,10-methenyltetrahydrofolate and then the hydrolysis of 5,10-methenyltetrahydrofolate to 10-formyltetrahydrofolate. In Rhizorhabdus wittichii (strain DSM 6014 / CCUG 31198 / JCM 15750 / NBRC 105917 / EY 4224 / RW1) (Sphingomonas wittichii), this protein is Bifunctional protein FolD 1.